A 788-amino-acid polypeptide reads, in one-letter code: Pyridoxal-dependent decarboxylase domain-containing protein 1 (788 aa).

The span at 28-40 (EDSQRRTEEENGK) shows a compositional bias: basic and acidic residues. Residues 28–51 (EDSQRRTEEENGKKLISGDIPGPL) are disordered. Thr414 is subject to Phosphothreonine. Ser652 is subject to Phosphoserine. The disordered stretch occupies residues 684-788 (AGVTLPPTPS…SQVEGPESLR (105 aa)). Thr687 and Thr691 each carry phosphothreonine. Phosphoserine is present on residues Ser710, Ser718, and Ser722. Residues 725 to 734 (HIEDLEKVER) show a composition bias toward basic and acidic residues. A compositionally biased stretch (polar residues) spans 738-750 (GPEQITLEASSTE). 4 positions are modified to phosphoserine: Ser748, Ser757, Ser779, and Ser786. A compositionally biased stretch (basic and acidic residues) spans 772-788 (PHPEDDHSQVEGPESLR).

It belongs to the group II decarboxylase family. Pyridoxal 5'-phosphate is required as a cofactor.

This is Pyridoxal-dependent decarboxylase domain-containing protein 1 (PDXDC1) from Homo sapiens (Human).